We begin with the raw amino-acid sequence, 212 residues long: uncharacterized protein (212 aa).

The S-adenosyl-L-methionine site is built by glycine 53 and glutamate 74.

It belongs to the methyltransferase superfamily. YrrT family.

Could be a S-adenosyl-L-methionine-dependent methyltransferase. This is an uncharacterized protein from Exiguobacterium sibiricum (strain DSM 17290 / CCUG 55495 / CIP 109462 / JCM 13490 / 255-15).